The following is a 984-amino-acid chain: Putative formate dehydrogenase SAB2186c (984 aa).

The region spanning 3–79 (EHLVVTLDGK…PMTVNTVNND (77 aa)) is the 2Fe-2S ferredoxin-type domain. The [2Fe-2S] cluster site is built by C37, C48, C51, and C63. The region spanning 79–119 (DVKDAQKEALDRILEKHMLYCTVCDYNNGDCEIHNTMDAWG) is the 4Fe-4S His(Cys)3-ligated-type domain. Residues H95, C99, C102, C109, C147, C150, C153, C157, C190, C193, C196, C200, C264, C267, C271, and C299 each contribute to the [4Fe-4S] cluster site. 2 consecutive 4Fe-4S ferredoxin-type domains span residues 138–165 (PFYR…VNET) and 181–211 (NDVP…VNME). The segment at 252–984 (MRKERIKKTK…YVFPGNQVDK (733 aa)) is formate dehydrogenase. A 4Fe-4S Mo/W bis-MGD-type domain is found at 257-313 (IKKTKTVCTYCGVGCSFEVWTKDREILKVQPSHDSPANKIATCVKGKFSWGHINSDQ).

This sequence in the C-terminal section; belongs to the prokaryotic molybdopterin-containing oxidoreductase family. Requires [2Fe-2S] cluster as cofactor. [4Fe-4S] cluster serves as cofactor. The cofactor is Mo-bis(molybdopterin guanine dinucleotide).

It carries out the reaction formate + NAD(+) = CO2 + NADH. The sequence is that of Putative formate dehydrogenase SAB2186c from Staphylococcus aureus (strain bovine RF122 / ET3-1).